Consider the following 239-residue polypeptide: Small ribosomal subunit protein uS3c (239 aa).

The KH type-2 domain maps to 43–139; that stretch reads IKNYIQKNRK…RLNISIEKVK (97 aa). Positions 50 to 80 are disordered; that stretch reads NRKKSSNRKLESDSSSEVITHNRKNDSGSSS.

This sequence belongs to the universal ribosomal protein uS3 family. In terms of assembly, part of the 30S ribosomal subunit.

The protein resides in the plastid. It localises to the chloroplast. The protein is Small ribosomal subunit protein uS3c (rps3) of Lolium perenne (Perennial ryegrass).